Consider the following 463-residue polypeptide: Eukaryotic translation initiation factor 3 subunit E (463 aa).

A PCI domain is found at 224–407; sequence FNLGENQGCQ…NMLHITRPHA (184 aa). Residues 432–463 are disordered; that stretch reads QSSVGEPRERGERGERGNKGGRGRPRTQEVAA. Positions 437 to 449 are enriched in basic and acidic residues; the sequence is EPRERGERGERGN.

It belongs to the eIF-3 subunit E family. Component of the eukaryotic translation initiation factor 3 (eIF-3) complex.

The protein resides in the cytoplasm. Functionally, component of the eukaryotic translation initiation factor 3 (eIF-3) complex, which is involved in protein synthesis of a specialized repertoire of mRNAs and, together with other initiation factors, stimulates binding of mRNA and methionyl-tRNAi to the 40S ribosome. The eIF-3 complex specifically targets and initiates translation of a subset of mRNAs involved in cell proliferation. The protein is Eukaryotic translation initiation factor 3 subunit E of Cryptococcus neoformans var. neoformans serotype D (strain JEC21 / ATCC MYA-565) (Filobasidiella neoformans).